A 101-amino-acid polypeptide reads, in one-letter code: Gastrin (101 aa).

An N-terminal signal peptide occupies residues 1–21; the sequence is MQRLCVYVLIFALALAAFSEA. The interval 22 to 82 is disordered; it reads SWKPRSQQPD…SKKQGPWLEE (61 aa). Pyrrolidone carboxylic acid; in form big gastrin is present on Gln-59. A Pyrrolidone carboxylic acid; in form gastrin modification is found at Gln-76. Position 87 is a sulfotyrosine; partial (Tyr-87). The residue at position 92 (Phe-92) is a Phenylalanine amide. Position 96 is a phosphoserine (Ser-96). Residues 96 to 101 constitute a propeptide, removed in mature form; sequence SAEDEN.

The protein belongs to the gastrin/cholecystokinin family. Post-translationally, two different processing pathways probably exist in antral G-cells. In the dominant pathway progastrin is cleaved at three sites resulting in two major bioactive gastrins, gastrin-34 and gastrin-17. In the putative alternative pathway, progastrin may be processed only at the most C-terminal dibasic site resulting in the synthesis of gastrin-71. Sulfation enhances proteolytic processing, and blocks peptide degradation. Levels of sulfation differ between proteolytically-cleaved gastrins. Thus, gastrin-6 is almost 73% sulfated, whereas the larger gastrins are less than 50% sulfated. Sulfation levels are also tissue-specific.

It is found in the secreted. Gastrin stimulates the stomach mucosa to produce and secrete hydrochloric acid and the pancreas to secrete its digestive enzymes. It also stimulates smooth muscle contraction and increases blood circulation and water secretion in the stomach and intestine. This chain is Gastrin (GAST), found in Homo sapiens (Human).